A 21-amino-acid polypeptide reads, in one-letter code: Cold shock protein CspSt (21 aa).

The CSD domain maps to 1–21 (KNGTVKWFNAEKGFGFITSED).

It localises to the cytoplasm. In Streptococcus thermophilus, this protein is Cold shock protein CspSt.